The primary structure comprises 257 residues: GTP cyclohydrolase 1 type 2 homolog (257 aa).

4 residues coordinate a divalent metal cation: histidine 65, aspartate 103, histidine 221, and glutamate 224.

It belongs to the GTP cyclohydrolase I type 2/NIF3 family. In terms of assembly, homohexamer.

This chain is GTP cyclohydrolase 1 type 2 homolog (ykiD), found in Lactococcus lactis subsp. lactis (strain IL1403) (Streptococcus lactis).